A 112-amino-acid polypeptide reads, in one-letter code: MKKVEAIIKPFKLDEVKEALQEAGIQGLSVIEVKGFGRQKGHTELYRGAEYVVDFLPKVKIEMVLPDEMVDIAIEAIVGAARTEKIGDGKIFVSSIEQAIRIRTGETGEDAV.

Tyr-51 carries the O-UMP-tyrosine modification.

It belongs to the P(II) protein family. As to quaternary structure, homotrimer.

P-II indirectly controls the transcription of the glutamine synthetase gene (glnA). P-II prevents NR-II-catalyzed conversion of NR-I to NR-I-phosphate, the transcriptional activator of glnA. When P-II is uridylylated to P-II-UMP, these events are reversed. When the ratio of Gln to 2-ketoglutarate decreases, P-II is uridylylated to P-II-UMP, which causes the deadenylation of glutamine synthetase, so activating the enzyme. The protein is Nitrogen regulatory protein P-II (glnB) of Rhodobacter capsulatus (Rhodopseudomonas capsulata).